We begin with the raw amino-acid sequence, 118 residues long: Small ribosomal subunit protein uS17 (118 aa).

It belongs to the universal ribosomal protein uS17 family. Part of the 30S ribosomal subunit.

One of the primary rRNA binding proteins, it binds specifically to the 5'-end of 16S ribosomal RNA. The sequence is that of Small ribosomal subunit protein uS17 from Methanopyrus kandleri (strain AV19 / DSM 6324 / JCM 9639 / NBRC 100938).